We begin with the raw amino-acid sequence, 418 residues long: MGDKGTRVFKKASPNGKLTVYLGKRDFVDHIDLVDPVDGVVLVDPEYLKERRVYVTLTCAFRYGREDLDVLGLTFRKDLFVANVQSFPPAPEDKKPLTRLQERLIKKLGEHAYPFTFEIPPNLPCSVTLQPGPEDTGKACGVDYEVKAFCAENLEEKIHKRNSVRLVIRKVQYAPERPGPQPTAETTRQFLMSDKPLHLEASLDKEIYYHGEPISVNVHVTNNTNKTVKKIKISVRQYADICLFNTAQYKCPVAMEEADDTVAPSSTFCKVYTLTPFLANNREKRGLALDGKLKHEDTNLASSTLLREGANREILGIIVSYKVKVKLVVSRGGLLGDLASSDVAVELPFTLMHPKPKEEPPHREVPENETPVDTNLIELDTNDDDIVFEDFARQRLKGMKDDKEEEEDGTGSPQLNNR.

The segment at 1–163 (MGDKGTRVFK…LEEKIHKRNS (163 aa)) is interaction with SRC. Residues 45–86 (PEYLKERRVYVTLTCAFRYGREDLDVLGLTFRKDLFVANVQS) form an interaction with CHRM2 region. The residue at position 47 (Tyr47) is a Phosphotyrosine. 4 residues coordinate 1D-myo-inositol hexakisphosphate: Lys250, Met255, Lys324, and Lys326. The interval 318 to 418 (IVSYKVKVKL…GTGSPQLNNR (101 aa)) is interaction with TRAF6. The disordered stretch occupies residues 353 to 375 (HPKPKEEPPHREVPENETPVDTN). Residues 355-366 (KPKEEPPHREVP) are compositionally biased toward basic and acidic residues. The short motif at 385–395 (DIVFEDFARQR) is the [DE]-X(1,2)-F-X-X-[FL]-X-X-X-R motif element. The tract at residues 397–418 (KGMKDDKEEEEDGTGSPQLNNR) is disordered. Ser412 is modified (phosphoserine; by GRK5).

The protein belongs to the arrestin family. Monomer. Homodimer. Homooligomer; the self-association is mediated by InsP6-binding. Heterooligomer with ARRB2; the association is mediated by InsP6-binding. Interacts with GPR143. Interacts with ADRB2 (phosphorylated). Interacts with CHRM2 (phosphorylated). Interacts with LHCGR. Interacts with CYTH2 and CASR. Interacts with AP2B1 (dephosphorylated at 'Tyr-737'); phosphorylation of AP2B1 at 'Tyr-737' disrupts the interaction. Interacts (dephosphorylated at Ser-412) with CLTC. Interacts with CCR2 and GRK2. Interacts with CRR5. Interacts with PTAFR (phosphorylated on serine residues). Interacts with CLTC and MAP2K3. Interacts with CREB1. Interacts with TRAF6. Interacts with IGF1R and MDM2. Interacts with C5AR1. Interacts with PDE4D. Interacts with SRC (via the SH3 domain and the protein kinase domain); the interaction is independent of the phosphorylation state of SRC C-terminus. Interacts with TACR1. Interacts with RAF1. Interacts with CHUK, IKBKB and MAP3K14. Interacts with DVL1; the interaction is enhanced by phosphorylation of DVL1. Interacts with DVL2; the interaction is enhanced by phosphorylation of DVL2. Interacts with IGF1R. Associates with MAP kinase p38. Part of a MAPK signaling complex consisting of TACR1, ARRB1, SRC, MAPK1 (activated) and MAPK3 (activated). Part of a MAPK signaling complex consisting of F2RL1, ARRB1, RAF1, MAPK1 (activated) and MAPK3 (activated). Interacts with MAP2K4/MKK4. Interacts with HCK and CXCR1 (phosphorylated). Interacts with ACKR3 and ACKR4. Interacts with ARRDC1; the interaction is direct. Interacts with GPR61, GPR62 and GPR135. Constitutively phosphorylated at Ser-412 in the cytoplasm. At the plasma membrane, is rapidly dephosphorylated, a process that is required for clathrin binding and ADRB2 endocytosis but not for ADRB2 binding and desensitization. Once internalized, is rephosphorylated. Post-translationally, the ubiquitination status appears to regulate the formation and trafficking of beta-arrestin-GPCR complexes and signaling. Ubiquitination appears to occur GPCR-specific. Ubiquitinated by MDM2; the ubiquitination is required for rapid internalization of ADRB2. Deubiquitinated by USP33; the deubiquitination leads to a dissociation of the beta-arrestin-GPCR complex. Stimulation of a class A GPCR, such as ADRB2, induces transient ubiquitination and subsequently promotes association with USP33.

The protein resides in the cytoplasm. Its subcellular location is the nucleus. It is found in the cell membrane. The protein localises to the membrane. It localises to the clathrin-coated pit. The protein resides in the cell projection. Its subcellular location is the pseudopodium. It is found in the cytoplasmic vesicle. Its function is as follows. Functions in regulating agonist-mediated G-protein coupled receptor (GPCR) signaling by mediating both receptor desensitization and resensitization processes. During homologous desensitization, beta-arrestins bind to the GPRK-phosphorylated receptor and sterically preclude its coupling to the cognate G-protein; the binding appears to require additional receptor determinants exposed only in the active receptor conformation. The beta-arrestins target many receptors for internalization by acting as endocytic adapters (CLASPs, clathrin-associated sorting proteins) and recruiting the GPRCs to the adapter protein 2 complex 2 (AP-2) in clathrin-coated pits (CCPs). However, the extent of beta-arrestin involvement appears to vary significantly depending on the receptor, agonist and cell type. Internalized arrestin-receptor complexes traffic to intracellular endosomes, where they remain uncoupled from G-proteins. Two different modes of arrestin-mediated internalization occur. Class A receptors, like ADRB2, OPRM1, ENDRA, D1AR and ADRA1B dissociate from beta-arrestin at or near the plasma membrane and undergo rapid recycling. Class B receptors, like AVPR2, AGTR1, NTSR1, TRHR and TACR1 internalize as a complex with arrestin and traffic with it to endosomal vesicles, presumably as desensitized receptors, for extended periods of time. Receptor resensitization then requires that receptor-bound arrestin is removed so that the receptor can be dephosphorylated and returned to the plasma membrane. Involved in internalization of P2RY4 and UTP-stimulated internalization of P2RY2. Involved in phosphorylation-dependent internalization of OPRD1 ands subsequent recycling. Involved in the degradation of cAMP by recruiting cAMP phosphodiesterases to ligand-activated receptors. Beta-arrestins function as multivalent adapter proteins that can switch the GPCR from a G-protein signaling mode that transmits short-lived signals from the plasma membrane via small molecule second messengers and ion channels to a beta-arrestin signaling mode that transmits a distinct set of signals that are initiated as the receptor internalizes and transits the intracellular compartment. Acts as a signaling scaffold for MAPK pathways such as MAPK1/3 (ERK1/2). ERK1/2 activated by the beta-arrestin scaffold is largely excluded from the nucleus and confined to cytoplasmic locations such as endocytic vesicles, also called beta-arrestin signalosomes. Recruits c-Src/SRC to ADRB2 resulting in ERK activation. GPCRs for which the beta-arrestin-mediated signaling relies on both ARRB1 and ARRB2 (codependent regulation) include ADRB2, F2RL1 and PTH1R. For some GPCRs the beta-arrestin-mediated signaling relies on either ARRB1 or ARRB2 and is inhibited by the other respective beta-arrestin form (reciprocal regulation). Inhibits ERK1/2 signaling in AGTR1- and AVPR2-mediated activation (reciprocal regulation). Is required for SP-stimulated endocytosis of NK1R and recruits c-Src/SRC to internalized NK1R resulting in ERK1/2 activation, which is required for the antiapoptotic effects of SP. Is involved in proteinase-activated F2RL1-mediated ERK activity. Acts as a signaling scaffold for the AKT1 pathway. Is involved in alpha-thrombin-stimulated AKT1 signaling. Is involved in IGF1-stimulated AKT1 signaling leading to increased protection from apoptosis. Involved in activation of the p38 MAPK signaling pathway and in actin bundle formation. Involved in F2RL1-mediated cytoskeletal rearrangement and chemotaxis. Involved in AGTR1-mediated stress fiber formation by acting together with GNAQ to activate RHOA. Appears to function as signaling scaffold involved in regulation of MIP-1-beta-stimulated CCR5-dependent chemotaxis. Involved in attenuation of NF-kappa-B-dependent transcription in response to GPCR or cytokine stimulation by interacting with and stabilizing CHUK. May serve as nuclear messenger for GPCRs. Involved in OPRD1-stimulated transcriptional regulation by translocating to CDKN1B and FOS promoter regions and recruiting EP300 resulting in acetylation of histone H4. Involved in regulation of LEF1 transcriptional activity via interaction with DVL1 and/or DVL2 Also involved in regulation of receptors other than GPCRs. Involved in Toll-like receptor and IL-1 receptor signaling through the interaction with TRAF6 which prevents TRAF6 autoubiquitination and oligomerization required for activation of NF-kappa-B and JUN. Binds phosphoinositides. Binds inositolhexakisphosphate (InsP6). Involved in IL8-mediated granule release in neutrophils. Required for atypical chemokine receptor ACKR2-induced RAC1-LIMK1-PAK1-dependent phosphorylation of cofilin (CFL1) and for the up-regulation of ACKR2 from endosomal compartment to cell membrane, increasing its efficiency in chemokine uptake and degradation. Involved in the internalization of the atypical chemokine receptor ACKR3. Negatively regulates the NOTCH signaling pathway by mediating the ubiquitination and degradation of NOTCH1 by ITCH. Participates in the recruitment of the ubiquitin-protein ligase to the receptor. The sequence is that of Beta-arrestin-1 (ARRB1) from Homo sapiens (Human).